Consider the following 807-residue polypeptide: ATP-binding cassette sub-family F member 1 (807 aa).

Residues 1 to 227 are disordered; the sequence is MPKGPKQQPP…KEKAKKAEQM (227 aa). Ser22 carries the post-translational modification Phosphoserine. Positions 29 to 39 are enriched in basic residues; it reads KKGKKDKKTKK. The segment covering 47–65 has biased composition (basic and acidic residues); it reads VEDRQAGEEEKVLKEKEQQ. Residues 73–85 are compositionally biased toward basic residues; sequence QKKKRDTRKGRRK. Residue Ser106 is modified to Phosphoserine. Phosphoserine; by CK2 is present on residues Ser110 and Ser141. Basic and acidic residues predominate over residues 148–161; the sequence is EKHPPKPAKPEKNR. Phosphoserine is present on Ser167. Over residues 197-207 the composition is skewed to acidic residues; sequence LDDEEEQDEEE. Residues 208-227 show a composition bias toward basic and acidic residues; that stretch reads IKEKEPPKQGKEKAKKAEQM. An ABC transporter 1 domain is found at 266–510; sequence IKLEKFSISA…MYQQKQKELL (245 aa). 298-305 contacts ATP; the sequence is GPNGKGKT. The span at 521 to 542 shows a compositional bias: basic and acidic residues; it reads KELKAGGKSTKQAEKQTKEALT. Positions 521 to 564 are disordered; it reads KELKAGGKSTKQAEKQTKEALTRKQQKCRRKNQDEESQEAPELL. Ser557 is modified (phosphoserine). In terms of domain architecture, ABC transporter 2 spans 587–802; the sequence is LGLHGVTFGY…VLEALGEVMV (216 aa). Residue 620-627 participates in ATP binding; sequence GPNGVGKS.

It belongs to the ABC transporter superfamily. ABCF family. EF3 subfamily. Interacts (via N-terminus) with EIF2S1; the interaction is independent of its phosphorylated status. Associates (via both ABC transporter domains) with the ribosomes. In terms of processing, phosphorylated at phosphoserine and phosphothreonine. Phosphorylation on Ser-110 and Ser-141 by CK2; inhibits association of EIF2 with ribosomes.

The protein localises to the cytoplasm. Its subcellular location is the nucleus. The protein resides in the nucleoplasm. It localises to the nucleus envelope. In terms of biological role, required for efficient Cap- and IRES-mediated mRNA translation initiation. Not involved in the ribosome biogenesis. The protein is ATP-binding cassette sub-family F member 1 (ABCF1) of Sus scrofa (Pig).